A 232-amino-acid chain; its full sequence is MSLLNSVRNVIVPVHKEGYPFVAGFFVASLVLGWVFKPLFWIGLILTLWCAYFFRDPERMTAQDDDLAISPADGKVSGVQMVTPPAELNLGTEPMLRVSIFMNVFDCHVNRSPMRGRITNIAYRQGSFLNAELDKASEQNERNGLVIETKHGEIGVVQIAGLVARRILCFVNVNEPLDAGERIGLIRFGSRLDVFFPAGAEPRVAVGQRAIAGETIIAEFGSPKGPTVSRRS.

The active-site Schiff-base intermediate with substrate; via pyruvic acid is serine 190. At serine 190 the chain carries Pyruvic acid (Ser); by autocatalysis.

It belongs to the phosphatidylserine decarboxylase family. PSD-A subfamily. In terms of assembly, heterodimer of a large membrane-associated beta subunit and a small pyruvoyl-containing alpha subunit. The cofactor is pyruvate. Is synthesized initially as an inactive proenzyme. Formation of the active enzyme involves a self-maturation process in which the active site pyruvoyl group is generated from an internal serine residue via an autocatalytic post-translational modification. Two non-identical subunits are generated from the proenzyme in this reaction, and the pyruvate is formed at the N-terminus of the alpha chain, which is derived from the carboxyl end of the proenzyme. The post-translation cleavage follows an unusual pathway, termed non-hydrolytic serinolysis, in which the side chain hydroxyl group of the serine supplies its oxygen atom to form the C-terminus of the beta chain, while the remainder of the serine residue undergoes an oxidative deamination to produce ammonia and the pyruvoyl prosthetic group on the alpha chain.

It is found in the cell membrane. The enzyme catalyses a 1,2-diacyl-sn-glycero-3-phospho-L-serine + H(+) = a 1,2-diacyl-sn-glycero-3-phosphoethanolamine + CO2. Its pathway is phospholipid metabolism; phosphatidylethanolamine biosynthesis; phosphatidylethanolamine from CDP-diacylglycerol: step 2/2. Its function is as follows. Catalyzes the formation of phosphatidylethanolamine (PtdEtn) from phosphatidylserine (PtdSer). The chain is Phosphatidylserine decarboxylase proenzyme from Rhizobium rhizogenes (strain K84 / ATCC BAA-868) (Agrobacterium radiobacter).